A 322-amino-acid chain; its full sequence is Acetyl-coenzyme A carboxylase carboxyl transferase subunit alpha (322 aa).

The CoA carboxyltransferase C-terminal domain maps to 39–293; that stretch reads RLQKKSQALT…RRALTDTLAE (255 aa).

The protein belongs to the AccA family. Acetyl-CoA carboxylase is a heterohexamer composed of biotin carboxyl carrier protein (AccB), biotin carboxylase (AccC) and two subunits each of ACCase subunit alpha (AccA) and ACCase subunit beta (AccD).

The protein resides in the cytoplasm. The enzyme catalyses N(6)-carboxybiotinyl-L-lysyl-[protein] + acetyl-CoA = N(6)-biotinyl-L-lysyl-[protein] + malonyl-CoA. The protein operates within lipid metabolism; malonyl-CoA biosynthesis; malonyl-CoA from acetyl-CoA: step 1/1. Component of the acetyl coenzyme A carboxylase (ACC) complex. First, biotin carboxylase catalyzes the carboxylation of biotin on its carrier protein (BCCP) and then the CO(2) group is transferred by the carboxyltransferase to acetyl-CoA to form malonyl-CoA. In Thiobacillus denitrificans (strain ATCC 25259 / T1), this protein is Acetyl-coenzyme A carboxylase carboxyl transferase subunit alpha.